The chain runs to 1357 residues: DNA-directed RNA polymerase subunit beta (1357 aa).

It belongs to the RNA polymerase beta chain family. In terms of assembly, the RNAP catalytic core consists of 2 alpha, 1 beta, 1 beta' and 1 omega subunit. When a sigma factor is associated with the core the holoenzyme is formed, which can initiate transcription.

It catalyses the reaction RNA(n) + a ribonucleoside 5'-triphosphate = RNA(n+1) + diphosphate. In terms of biological role, DNA-dependent RNA polymerase catalyzes the transcription of DNA into RNA using the four ribonucleoside triphosphates as substrates. The chain is DNA-directed RNA polymerase subunit beta from Acinetobacter baumannii (strain ATCC 17978 / DSM 105126 / CIP 53.77 / LMG 1025 / NCDC KC755 / 5377).